Here is a 1531-residue protein sequence, read N- to C-terminus: Slit homolog 1 protein (1531 aa).

The signal sequence occupies residues 1-33; that stretch reads MALTPQRGSSSGLSRPELWLLLWAAAWRLGATA. The region spanning 34-61 is the LRRNT domain; it reads CPALCTCTGTTVDCHGTGLQAIPKNIPR. 6 LRR repeats span residues 62–83, 86–107, 110–131, 134–155, 158–179, and 182–203; these read NTER…DFAG, QLRV…AFDD, ELER…LFQN, ALSR…AFRG, DLKN…AFRA, and GLEV…SFNH. Asn72 is a glycosylation site (N-linked (GlcNAc...) asparagine). N-linked (GlcNAc...) asparagine glycosylation occurs at Asn192. An LRRCT 1 domain is found at 215-265; that stretch reads NHLFCDCHLAWLSQWLRQRPTIGLFTQCSGPASLRGLNVAEVQKSEFSCSG. In terms of domain architecture, LRRNT 2 spans 273–309; that stretch reads PACTLSSGSCPAMCSCSNGIVDCRGKGLTAIPANLPE. Residues Cys286 and Cys295 are joined by a disulfide bond. LRR repeat units follow at residues 310 to 331, 334 to 355, 358 to 379, 382 to 403, and 406 to 427; these read TMTE…AFSP, KLRR…AFQG, SLNS…VFGG, TLQL…AFQD, and NLSL…TFTS. N-linked (GlcNAc...) asparagine glycosylation occurs at Asn406. In terms of domain architecture, LRRCT 2 spans 439 to 489; that stretch reads NPFICDCNLKWLADFLRTNPIETTGARCASPRRLANKRIGQIKSKKFRCSA. 4 cysteine pairs are disulfide-bonded: Cys443-Cys466, Cys445-Cys487, Cys513-Cys519, and Cys517-Cys526. The region spanning 504–540 is the LRRNT 3 domain; the sequence is NSECTSDVACPHKCRCEASVVECSGLKLSKIPERIPQ. LRR repeat units follow at residues 541-562, 566-587, 590-611, 614-635, and 638-659; these read STTE…GLFK, HLKK…TFEG, SVSE…MFRG, GLRT…SFTG, and NVRL…AFDT. Residue Asn571 is glycosylated (N-linked (GlcNAc...) asparagine). Residue Asn630 is glycosylated (N-linked (GlcNAc...) asparagine). Residues 671 to 721 enclose the LRRCT 3 domain; the sequence is NPFNCNCQLAWLGDWLRKRKIVTGNPRCQNPDFLRQIPLQDVAFPDFRCEE. Intrachain disulfides connect Cys675–Cys698 and Cys677–Cys719. The region spanning 725–761 is the LRRNT 4 domain; sequence EVGCLPRPQCPQECACLDTVVRCSNKHLQALPKGIPK. 3 N-linked (GlcNAc...) asparagine glycosylation sites follow: Asn762, Asn801, and Asn806. 4 LRR repeats span residues 762-783, 785-806, 809-830, and 833-854; these read NVTE…LSTF, YLQL…SFTN, QLTT…AFQG, and SLRL…IFAD. Residues 866–916 form the LRRCT 4 domain; the sequence is NPLYCDCHLRWLSSWVKTGYKEPGIARCAGPPEMEGKLLLTTPAKKFECQG. 6 EGF-like domains span residues 927-962, 964-1003, 1005-1041, 1043-1081, 1083-1119, and 1124-1160; these read DPCL…RNCE, SLDS…LTCG, NTDD…RACE, LVDF…DNCS, NQDD…QLCE, and PRNS…PECE. 18 cysteine pairs are disulfide-bonded: Cys929-Cys940, Cys934-Cys950, Cys952-Cys961, Cys968-Cys979, Cys973-Cys991, Cys993-Cys1002, Cys1009-Cys1020, Cys1014-Cys1029, Cys1031-Cys1040, Cys1047-Cys1060, Cys1054-Cys1069, Cys1071-Cys1080, Cys1087-Cys1098, Cys1092-Cys1107, Cys1109-Cys1118, Cys1128-Cys1139, Cys1133-Cys1148, and Cys1150-Cys1159. N-linked (GlcNAc...) asparagine glycosylation occurs at Asn1026. An N-linked (GlcNAc...) asparagine glycan is attached at Asn1079. In terms of domain architecture, Laminin G-like spans 1163 to 1336; that stretch reads LSVNFVDRDT…QMKPGVVPGC (174 aa). Residues Asn1186, Asn1256, and Asn1303 are each glycosylated (N-linked (GlcNAc...) asparagine). Intrachain disulfides connect Cys1310/Cys1336, Cys1339/Cys1349, Cys1344/Cys1359, Cys1361/Cys1370, Cys1378/Cys1388, Cys1383/Cys1398, Cys1400/Cys1409, Cys1419/Cys1429, Cys1424/Cys1439, Cys1441/Cys1450, Cys1456/Cys1495, Cys1474/Cys1509, Cys1485/Cys1525, and Cys1489/Cys1527. 3 EGF-like domains span residues 1337-1371, 1374-1410, and 1415-1451; these read EPCR…LHCD, VDGP…ALCN, and VAEP…ELCE. The region spanning 1456 to 1531 is the CTCK domain; it reads CRGDPVRDFH…PTKCGCAPCA (76 aa).

In terms of assembly, interacts with ROBO1 and GREM1. As to expression, in adult brains expressed in the hippocampus, cerebral cortex, and olfactory bulb but not in the cerebellum. In embryo expressed in cerebral cortex.

The protein localises to the secreted. In terms of biological role, thought to act as molecular guidance cue in cellular migration, and function appears to be mediated by interaction with roundabout homolog receptors. During neural development involved in axonal navigation at the ventral midline of the neural tube and projection of axons to different regions. SLIT1 and SLIT2 together seem to be essential for midline guidance in the forebrain by acting as repulsive signal preventing inappropriate midline crossing by axons projecting from the olfactory bulb. This is Slit homolog 1 protein (Slit1) from Rattus norvegicus (Rat).